The chain runs to 593 residues: ETS-related transcription factor Elf-2 (593 aa).

The disordered stretch occupies residues M1–A34. A Phosphoserine modification is found at S107. Residues V146–K199 are disordered. Residues M171–K181 are compositionally biased toward basic residues. At T182 the chain carries Phosphothreonine. Polar residues predominate over residues T182–S191. Phosphoserine occurs at positions 185 and 191. Positions T208–K290 form a DNA-binding region, ETS. The segment at T362–A383 is disordered. Phosphoserine is present on residues S363 and S372. The span at S370–A383 shows a compositional bias: low complexity. The residue at position 376 (T376) is a Phosphothreonine. S432 bears the Phosphoserine mark. Position 496 is an omega-N-methylarginine (R496). Residue T523 is modified to Phosphothreonine. Residue K538 forms a Glycyl lysine isopeptide (Lys-Gly) (interchain with G-Cter in SUMO2) linkage.

This sequence belongs to the ETS family. As to quaternary structure, interacts with LIM domains of LMO2. Interacts via its N-terminal region with RUNX1. As to expression, expressed in all tissues examined. Highest levels in thymocytes and bone marrow.

It is found in the nucleus. Functionally, probably transcriptionally activates the LYN and BLK promoters and acts synergistically with RUNX1 to transactivate the BLK promoter. The chain is ETS-related transcription factor Elf-2 from Mus musculus (Mouse).